The sequence spans 98 residues: Small ribosomal subunit protein eS24 (98 aa).

Belongs to the eukaryotic ribosomal protein eS24 family.

This chain is Small ribosomal subunit protein eS24, found in Thermococcus onnurineus (strain NA1).